The chain runs to 144 residues: 3-hydroxyacyl-[acyl-carrier-protein] dehydratase FabZ (144 aa).

Histidine 48 is an active-site residue.

The protein belongs to the thioester dehydratase family. FabZ subfamily.

It is found in the cytoplasm. The enzyme catalyses a (3R)-hydroxyacyl-[ACP] = a (2E)-enoyl-[ACP] + H2O. Involved in unsaturated fatty acids biosynthesis. Catalyzes the dehydration of short chain beta-hydroxyacyl-ACPs and long chain saturated and unsaturated beta-hydroxyacyl-ACPs. This is 3-hydroxyacyl-[acyl-carrier-protein] dehydratase FabZ from Listeria welshimeri serovar 6b (strain ATCC 35897 / DSM 20650 / CCUG 15529 / CIP 8149 / NCTC 11857 / SLCC 5334 / V8).